We begin with the raw amino-acid sequence, 242 residues long: Protein HTATIP2 (242 aa).

The residue at position 2 (Ala-2) is an N-acetylalanine. Positions 2 to 25 (AETEALSKLREDFRMQNKSVFILG) are required for interaction with elongation factor EEF1A1. NADPH-binding residues include Ser-27, Gly-28, Glu-29, Thr-30, Arg-52, Arg-53, Leu-92, Gly-93, Tyr-143, Lys-147, and Arg-178. Tyr-143 acts as the Proton acceptor in catalysis. Lys-147 is an active-site residue.

In terms of assembly, monomer. Forms homodimers during oxidative stress. Interacts (via N-terminus) with elongation factor EEF1A1 (via middle-region); the interaction is direct and competes with EEF1A1 binding to guanyl-nucleotide exchange factor EEF1B2, thereby inhibiting GDP for GTP exchange and reactivation of EEF1A1. Interacts with nuclear transport receptors XPO4, IPO5/RANBP5, IPO7, IPO9 and KPNB1 as well as GCN1L1/GCN1 and LRPPRC probably through their HEAT repeats. Binds NCOA5/CIA.

The protein localises to the cytoplasm. Represses translation by preventing reactivation of elongation factor eEF1A. May also inhibit nuclear import by competing with nuclear import substrates for binding to a subset of nuclear transport receptors. Has additionally been proposed to act as a redox sensor involved in cellular oxidative stress surveillance. This chain is Protein HTATIP2 (HTATIP2), found in Pan paniscus (Pygmy chimpanzee).